A 152-amino-acid polypeptide reads, in one-letter code: Xanthine-guanine phosphoribosyltransferase (152 aa).

5-phospho-alpha-D-ribose 1-diphosphate-binding positions include 37-38 (RG), arginine 69, and 88-96 (DDLVDTGGT). Arginine 69 is a binding site for GMP. Position 89 (aspartate 89) interacts with Mg(2+). Positions 92 and 135 each coordinate guanine. The xanthine site is built by aspartate 92 and isoleucine 135. GMP is bound by residues 92–96 (DTGGT) and 134–135 (WI).

The protein belongs to the purine/pyrimidine phosphoribosyltransferase family. XGPT subfamily. As to quaternary structure, homotetramer. Mg(2+) serves as cofactor.

It localises to the cell inner membrane. It catalyses the reaction GMP + diphosphate = guanine + 5-phospho-alpha-D-ribose 1-diphosphate. The enzyme catalyses XMP + diphosphate = xanthine + 5-phospho-alpha-D-ribose 1-diphosphate. The catalysed reaction is IMP + diphosphate = hypoxanthine + 5-phospho-alpha-D-ribose 1-diphosphate. It participates in purine metabolism; GMP biosynthesis via salvage pathway; GMP from guanine: step 1/1. Its pathway is purine metabolism; XMP biosynthesis via salvage pathway; XMP from xanthine: step 1/1. In terms of biological role, purine salvage pathway enzyme that catalyzes the transfer of the ribosyl-5-phosphate group from 5-phospho-alpha-D-ribose 1-diphosphate (PRPP) to the N9 position of the 6-oxopurines guanine and xanthine to form the corresponding ribonucleotides GMP (guanosine 5'-monophosphate) and XMP (xanthosine 5'-monophosphate), with the release of PPi. To a lesser extent, also acts on hypoxanthine. The sequence is that of Xanthine-guanine phosphoribosyltransferase from Photobacterium profundum (strain SS9).